A 946-amino-acid chain; its full sequence is Aminopeptidase N (946 aa).

A signal peptide spans methionine 1 to glycine 15. Asparagine 60 is a glycosylation site (N-linked (GlcNAc...) asparagine). Glycine 308 to asparagine 312 is a substrate binding site. Histidine 344 lines the Zn(2+) pocket. The active-site Proton acceptor is the glutamate 345. Positions 348 and 367 each coordinate Zn(2+). 2 N-linked (GlcNAc...) asparagine glycosylation sites follow: asparagine 550 and asparagine 605. Cystine bridges form between cysteine 715–cysteine 722 and cysteine 751–cysteine 787.

Belongs to the peptidase M1 family. Zn(2+) is required as a cofactor.

The protein localises to the cell membrane. It catalyses the reaction Release of an N-terminal amino acid, Xaa-|-Yaa- from a peptide, amide or arylamide. Xaa is preferably Ala, but may be most amino acids including Pro (slow action). When a terminal hydrophobic residue is followed by a prolyl residue, the two may be released as an intact Xaa-Pro dipeptide.. This chain is Aminopeptidase N (APN1), found in Plutella xylostella (Diamondback moth).